Reading from the N-terminus, the 283-residue chain is Tetraspanin-33 (283 aa).

The Cytoplasmic portion of the chain corresponds to methionine 1–tyrosine 24. Residues leucine 25–valine 45 traverse the membrane as a helical segment. Over tyrosine 46–proline 64 the chain is Extracellular. Residues alanine 65–glycine 85 traverse the membrane as a helical segment. Residues serine 86–threonine 96 are Cytoplasmic-facing. A helical transmembrane segment spans residues phenylalanine 97–valine 117. Residues phenylalanine 118–asparagine 235 are Extracellular-facing. 4 disulfides stabilise this stretch: cysteine 156–cysteine 224, cysteine 157–cysteine 189, cysteine 173–cysteine 183, and cysteine 190–cysteine 203. Residue asparagine 172 is glycosylated (N-linked (GlcNAc...) asparagine). Residues leucine 236 to leucine 256 traverse the membrane as a helical segment. Residues serine 257 to tyrosine 283 lie on the Cytoplasmic side of the membrane.

It belongs to the tetraspanin (TM4SF) family. As to quaternary structure, homodimer; disulfide-linked. Interacts (via extracellular domain) with ADAM10 (via extracellular domain). Interacts (via cytoplasmic domain) with PLEKHA7 (via WW domains); the interaction is dependent on PDZD11 being bound to PLEKHA7 and facilitates the docking of ADAM10 to zonula adherens. Predominantly expressed in erythroblasts.

It localises to the cell membrane. The protein localises to the cell junction. Its subcellular location is the adherens junction. The protein resides in the cytoplasm. Functionally, part of TspanC8 subgroup, composed of 6 members that interact with the transmembrane metalloprotease ADAM10. This interaction is required for ADAM10 exit from the endoplasmic reticulum and for enzymatic maturation and trafficking to the cell surface as well as substrate specificity. Different TspanC8/ADAM10 complexes have distinct substrates. Plays an important role in normal erythropoiesis. It has a role in the differentiation of erythroid progenitors. Negatively regulates ligand-induced Notch activity probably by regulating ADAM10 activity. Mediates docking of ADAM10 to zonula adherens by interacting with ADAM10 and, in a PDZD11-dependent manner, with the zonula adherens protein PLEKHA7. The polypeptide is Tetraspanin-33 (Homo sapiens (Human)).